The sequence spans 428 residues: Histidinol dehydrogenase homolog (428 aa).

Zn(2+) contacts are provided by Gln-250 and His-253. Active-site proton acceptor residues include Glu-320 and His-321. Asp-354 and His-413 together coordinate Zn(2+).

The protein belongs to the histidinol dehydrogenase family. Zn(2+) serves as cofactor.

The protein is Histidinol dehydrogenase homolog of Pelagibacter ubique (strain HTCC1062).